The primary structure comprises 704 residues: Elongation factor G (704 aa).

A tr-type G domain is found at 6–282 (NKVRNIGIMA…AVIDYLPTPL (277 aa)). GTP contacts are provided by residues 15–22 (AHIDAGKT), 79–83 (DTPGH), and 133–136 (NKMD).

Belongs to the TRAFAC class translation factor GTPase superfamily. Classic translation factor GTPase family. EF-G/EF-2 subfamily.

The protein resides in the cytoplasm. Functionally, catalyzes the GTP-dependent ribosomal translocation step during translation elongation. During this step, the ribosome changes from the pre-translocational (PRE) to the post-translocational (POST) state as the newly formed A-site-bound peptidyl-tRNA and P-site-bound deacylated tRNA move to the P and E sites, respectively. Catalyzes the coordinated movement of the two tRNA molecules, the mRNA and conformational changes in the ribosome. The polypeptide is Elongation factor G (Corynebacterium diphtheriae (strain ATCC 700971 / NCTC 13129 / Biotype gravis)).